The sequence spans 203 residues: Small ribosomal subunit protein uS5 (203 aa).

The span at 1 to 18 shows a compositional bias: basic and acidic residues; the sequence is MENNVKKETIVDSEKVEK. Residues 1-36 are disordered; sequence MENNVKKETIVDSEKVEKQQPVTAPVVNKKENTQPK. The S5 DRBM domain maps to 49–112; the sequence is FEERVVKIKR…KNANNNLIKV (64 aa).

It belongs to the universal ribosomal protein uS5 family. As to quaternary structure, part of the 30S ribosomal subunit. Contacts proteins S4 and S8.

With S4 and S12 plays an important role in translational accuracy. Functionally, located at the back of the 30S subunit body where it stabilizes the conformation of the head with respect to the body. The polypeptide is Small ribosomal subunit protein uS5 (Ureaplasma urealyticum serovar 10 (strain ATCC 33699 / Western)).